The chain runs to 424 residues: Gamma-glutamyl phosphate reductase (424 aa).

Belongs to the gamma-glutamyl phosphate reductase family.

Its subcellular location is the cytoplasm. It carries out the reaction L-glutamate 5-semialdehyde + phosphate + NADP(+) = L-glutamyl 5-phosphate + NADPH + H(+). Its pathway is amino-acid biosynthesis; L-proline biosynthesis; L-glutamate 5-semialdehyde from L-glutamate: step 2/2. Its function is as follows. Catalyzes the NADPH-dependent reduction of L-glutamate 5-phosphate into L-glutamate 5-semialdehyde and phosphate. The product spontaneously undergoes cyclization to form 1-pyrroline-5-carboxylate. This is Gamma-glutamyl phosphate reductase from Shewanella sediminis (strain HAW-EB3).